Reading from the N-terminus, the 310-residue chain is Putative RING-H2 finger protein ATL53 (310 aa).

The chain crosses the membrane as a helical span at residues 62-82; that stretch reads VIAIFGIFATAFLLAAYYTLV. The RING-type; atypical zinc finger occupies 155 to 197; the sequence is CSICLGEFNEDESLRLLPKCNHTFHVVCIDRWLKSHSNCPLCR.

Belongs to the RING-type zinc finger family. ATL subfamily.

The protein localises to the membrane. It carries out the reaction S-ubiquitinyl-[E2 ubiquitin-conjugating enzyme]-L-cysteine + [acceptor protein]-L-lysine = [E2 ubiquitin-conjugating enzyme]-L-cysteine + N(6)-ubiquitinyl-[acceptor protein]-L-lysine.. Its pathway is protein modification; protein ubiquitination. The chain is Putative RING-H2 finger protein ATL53 (ATL53) from Arabidopsis thaliana (Mouse-ear cress).